Reading from the N-terminus, the 949-residue chain is Bifunctional uridylyltransferase/uridylyl-removing enzyme (949 aa).

The tract at residues 1–37 is disordered; it reads MKETSFWGETPSLSFADDTDKPLSDRTASPPCDPASS. The uridylyltransferase stretch occupies residues 1-395; it reads MKETSFWGET…TTGEPPKVVP (395 aa). The interval 396 to 756 is uridylyl-removing; that stretch reads GPEEFQTIAG…AYPIPERGVT (361 aa). The HD domain occupies 516 to 632; sequence VDEHIVEAVR…LDLADTIQSP (117 aa). 2 ACT domains span residues 757–834 and 870–949; these read ELTV…LDIR and VIEV…TPAS.

Belongs to the GlnD family. Requires Mg(2+) as cofactor.

It catalyses the reaction [protein-PII]-L-tyrosine + UTP = [protein-PII]-uridylyl-L-tyrosine + diphosphate. It carries out the reaction [protein-PII]-uridylyl-L-tyrosine + H2O = [protein-PII]-L-tyrosine + UMP + H(+). Its activity is regulated as follows. Uridylyltransferase (UTase) activity is inhibited by glutamine, while glutamine activates uridylyl-removing (UR) activity. Its function is as follows. Modifies, by uridylylation and deuridylylation, the PII regulatory proteins (GlnB and homologs), in response to the nitrogen status of the cell that GlnD senses through the glutamine level. Under low glutamine levels, catalyzes the conversion of the PII proteins and UTP to PII-UMP and PPi, while under higher glutamine levels, GlnD hydrolyzes PII-UMP to PII and UMP (deuridylylation). Thus, controls uridylylation state and activity of the PII proteins, and plays an important role in the regulation of nitrogen assimilation and metabolism. This chain is Bifunctional uridylyltransferase/uridylyl-removing enzyme, found in Gluconobacter oxydans (strain 621H) (Gluconobacter suboxydans).